A 52-amino-acid polypeptide reads, in one-letter code: Metallothionein-2 (52 aa).

2 repeats span residues 43-47 (QTCKC) and 48-52 (QTCKC).

It belongs to the metallothionein superfamily. Type 10 family.

In terms of biological role, the metallothioneins are involved in the cellular sequestration of toxic metal ions. The sequence is that of Metallothionein-2 (MT-II) from Candida glabrata (strain ATCC 2001 / BCRC 20586 / JCM 3761 / NBRC 0622 / NRRL Y-65 / CBS 138) (Yeast).